A 70-amino-acid chain; its full sequence is UPF0337 protein BC_3635 (70 aa).

It belongs to the UPF0337 (CsbD) family.

This is UPF0337 protein BC_3635 from Bacillus cereus (strain ATCC 14579 / DSM 31 / CCUG 7414 / JCM 2152 / NBRC 15305 / NCIMB 9373 / NCTC 2599 / NRRL B-3711).